The chain runs to 185 residues: Small ribosomal subunit protein uS4 (185 aa).

In terms of domain architecture, S4 RNA-binding spans 107–179 (RRLQTLVYRK…NGRRKRKNNH (73 aa)). Residues 161-185 (NTPLTNPEINGRRKRKNNHAGKEDN) form a disordered region.

It belongs to the universal ribosomal protein uS4 family.

The protein is Small ribosomal subunit protein uS4 of Entamoeba histolytica (strain ATCC 30459 / HM-1:IMSS / ABRM).